A 341-amino-acid polypeptide reads, in one-letter code: Glucokinase (341 aa).

Residue 7 to 12 (GDIGGT) participates in ATP binding.

It belongs to the bacterial glucokinase family.

It localises to the cytoplasm. The catalysed reaction is D-glucose + ATP = D-glucose 6-phosphate + ADP + H(+). This is Glucokinase from Nostoc punctiforme (strain ATCC 29133 / PCC 73102).